We begin with the raw amino-acid sequence, 495 residues long: Glutamate--tRNA ligase (495 aa).

Residues 13-23 carry the 'HIGH' region motif; the sequence is PSPTGTPHVGL. The 'KMSKS' region motif lies at 257-261; it reads KLSKR. Lys-260 is a binding site for ATP.

This sequence belongs to the class-I aminoacyl-tRNA synthetase family. Glutamate--tRNA ligase type 1 subfamily. Monomer.

The protein resides in the cytoplasm. It carries out the reaction tRNA(Glu) + L-glutamate + ATP = L-glutamyl-tRNA(Glu) + AMP + diphosphate. Functionally, catalyzes the attachment of glutamate to tRNA(Glu) in a two-step reaction: glutamate is first activated by ATP to form Glu-AMP and then transferred to the acceptor end of tRNA(Glu). This is Glutamate--tRNA ligase from Mycolicibacterium vanbaalenii (strain DSM 7251 / JCM 13017 / BCRC 16820 / KCTC 9966 / NRRL B-24157 / PYR-1) (Mycobacterium vanbaalenii).